Consider the following 116-residue polypeptide: Large ribosomal subunit protein uL18 (116 aa).

This sequence belongs to the universal ribosomal protein uL18 family. In terms of assembly, part of the 50S ribosomal subunit; part of the 5S rRNA/L5/L18/L25 subcomplex. Contacts the 5S and 23S rRNAs.

In terms of biological role, this is one of the proteins that bind and probably mediate the attachment of the 5S RNA into the large ribosomal subunit, where it forms part of the central protuberance. The protein is Large ribosomal subunit protein uL18 of Caulobacter vibrioides (strain ATCC 19089 / CIP 103742 / CB 15) (Caulobacter crescentus).